Here is a 330-residue protein sequence, read N- to C-terminus: D-alanine--D-alanine ligase (330 aa).

An ATP-grasp domain is found at 122–323; sequence NRFLSGFGIR…MKEVLCTIIR (202 aa). Position 151-206 (151-206) interacts with ATP; that stretch reads IARMGLPLFVKPNVGGSSIATTKVVEAAQLLPAIEQAFSEGEEVMIERLICGTEVT. Asp277, Glu290, and Asn292 together coordinate Mg(2+).

The protein belongs to the D-alanine--D-alanine ligase family. Mg(2+) serves as cofactor. Mn(2+) is required as a cofactor.

Its subcellular location is the cytoplasm. It catalyses the reaction 2 D-alanine + ATP = D-alanyl-D-alanine + ADP + phosphate + H(+). It functions in the pathway cell wall biogenesis; peptidoglycan biosynthesis. In terms of biological role, cell wall formation. This chain is D-alanine--D-alanine ligase, found in Porphyromonas gingivalis (strain ATCC BAA-308 / W83).